Here is a 235-residue protein sequence, read N- to C-terminus: Large ribosomal subunit protein uL1 (235 aa).

It belongs to the universal ribosomal protein uL1 family. As to quaternary structure, part of the 50S ribosomal subunit.

Functionally, binds directly to 23S rRNA. The L1 stalk is quite mobile in the ribosome, and is involved in E site tRNA release. In terms of biological role, protein L1 is also a translational repressor protein, it controls the translation of the L11 operon by binding to its mRNA. The polypeptide is Large ribosomal subunit protein uL1 (Lawsonia intracellularis (strain PHE/MN1-00)).